A 108-amino-acid polypeptide reads, in one-letter code: Ribonuclease P protein component (108 aa).

It belongs to the RnpA family. As to quaternary structure, consists of a catalytic RNA component (M1 or rnpB) and a protein subunit.

It catalyses the reaction Endonucleolytic cleavage of RNA, removing 5'-extranucleotides from tRNA precursor.. Functionally, RNaseP catalyzes the removal of the 5'-leader sequence from pre-tRNA to produce the mature 5'-terminus. It can also cleave other RNA substrates such as 4.5S RNA. The protein component plays an auxiliary but essential role in vivo by binding to the 5'-leader sequence and broadening the substrate specificity of the ribozyme. This Campylobacter jejuni subsp. doylei (strain ATCC BAA-1458 / RM4099 / 269.97) protein is Ribonuclease P protein component.